The primary structure comprises 99 residues: Cyclin-dependent kinases regulatory subunit (99 aa).

Belongs to the CKS family. As to quaternary structure, forms a homohexamer that can probably bind six kinase subunits.

Its function is as follows. Binds to the catalytic subunit of the cyclin dependent kinases (Cdc2) and is essential for their biological function. This chain is Cyclin-dependent kinases regulatory subunit, found in Leishmania mexicana.